Consider the following 329-residue polypeptide: Neuropeptides B/W receptor type 1 (329 aa).

The Extracellular segment spans residues 1–43 (MHNLTLFESGGDNVSCGGSSLGCPNGSSLAPLPLPQPLAVAVP). Residues asparagine 3, asparagine 13, and asparagine 25 are each glycosylated (N-linked (GlcNAc...) asparagine). A helical transmembrane segment spans residues 44 to 64 (VVYGVICAVGLAGNSAVLYVL). Residues 65–75 (LRTPRMKTVTN) lie on the Cytoplasmic side of the membrane. The chain crosses the membrane as a helical span at residues 76-96 (VFILNLAIADELFTLVLPINI). At 97-112 (ADFLLRRWPFGEVMCK) the chain is on the extracellular side. Cysteine 111 and cysteine 190 are joined by a disulfide. A helical transmembrane segment spans residues 113-133 (LIVAVDQYNTFSSLYFLAVMS). Residues 134–158 (ADRYLVVLATAESRRVSGRTYGAAR) lie on the Cytoplasmic side of the membrane. Residues 159–179 (AVSLAVWALVTLVVLPFAVFA) form a helical membrane-spanning segment. Residues 180-209 (RLDEEQGRRQCVLVFPQPEAFWWRASRLYT) lie on the Extracellular side of the membrane. A helical transmembrane segment spans residues 210 to 230 (LVLGFAIPVTTICALYTTLLC). Topologically, residues 231-250 (RLRAIQLDSHAKALDRAKKR) are cytoplasmic. Residues 251–271 (VTLLVAAILAVCLLCWTPYHL) form a helical membrane-spanning segment. The Extracellular segment spans residues 272 to 289 (STIVALTTDLPQTPLVIG). Residues 290–312 (ISYFITSLSYANSCLNPFLYAFL) traverse the membrane as a helical segment. The Cytoplasmic portion of the chain corresponds to 313–329 (DDSFRRSLRQLVSCRSA).

It belongs to the G-protein coupled receptor 1 family.

It is found in the cell membrane. Functionally, interacts specifically with a number of opioid ligands. Receptor for neuropeptides B and W, which may be involved in neuroendocrine system regulation, food intake and the organization of other signals. This chain is Neuropeptides B/W receptor type 1 (Npbwr1), found in Mus musculus (Mouse).